A 794-amino-acid polypeptide reads, in one-letter code: LPS-assembly protein LptD (794 aa).

The first 31 residues, 1–31 (MPSHCSSLLCARFRLSSLAVIVALAASGVRA), serve as a signal peptide directing secretion.

Belongs to the LptD family. Component of the lipopolysaccharide transport and assembly complex. Interacts with LptE and LptA.

The protein resides in the cell outer membrane. Functionally, together with LptE, is involved in the assembly of lipopolysaccharide (LPS) at the surface of the outer membrane. The chain is LPS-assembly protein LptD from Marinobacter nauticus (strain ATCC 700491 / DSM 11845 / VT8) (Marinobacter aquaeolei).